The primary structure comprises 805 residues: MRYEFSAIEKKWQAIWQENGTFKTGESTEKPKYYVLDMFPYPSGSGLHVGHLEGYTASDIIARFKRSRGFNVLHPMGWDAFGLPAEQYAIKTGTHPKITTENNIRSFRETLQAMGFSYDWSKEINTTDPAYFKWTQWIFLRLYEMGLAYMSDVDVNWCEELKTVLANEEVDEKIADGYTVVRKPLRQWVLKITAYAERLLADLDELEWPENVKQMQRNWIGRSEGVEIDFELRCHGKNLRVYTTRPDTLFGATYLVVSPEHPLAEKLATADNLKEVKAYISRAKLKTELERTGLQKDKTGVFTGSYAINPATGNPLPVWISDFVLISYGTGAIMSVPAHDSRDWEFAKKFDLPIIEVIKSPHDVNDAVFEGKESVPVNSSNSEITIDGLPFREAFDTMASWLEKKGAGKRTINYKLRDWIFSRQRYWGEPIPIKHYEDGTLRTETILPLTLPDVEAYQPSETGESPLATIHDWLYGSDEFGSFRRETNTMPQWAGSCWYYLRFIDPENSGRLIDPEREKYWMNVDLYIGGAEHAVLHLLYARFWHKVLFDLNVVSTVEPFRKLFNQGMILGEDNEKMSKSRGNVIPADHVLKTYGADAVRLYEMFLGPLEQVKPWNTNGIEGISRFLGKVWRLVYPEQEGNKAELTDETMPEELLRRLHKTIRKVTEDTEALKFNTAIAEMMVLVNELQRNGCRNRTAVESMILLLAPYAPHIAEELWQATGHTGSISNEPFPNYVAGLATDSVVQIAVQVNGKLRGTFSTPAGTPQNSLIETARNVESVMKFLEGKAIMREIVVPDKLVNFAVK.

Residues 40–51 carry the 'HIGH' region motif; sequence PYPSGSGLHVGH. A 'KMSKS' region motif is present at residues 576-580; that stretch reads KMSKS. K579 is a binding site for ATP.

It belongs to the class-I aminoacyl-tRNA synthetase family.

It localises to the cytoplasm. The catalysed reaction is tRNA(Leu) + L-leucine + ATP = L-leucyl-tRNA(Leu) + AMP + diphosphate. The sequence is that of Leucine--tRNA ligase from Chlorobium limicola (strain DSM 245 / NBRC 103803 / 6330).